A 112-amino-acid chain; its full sequence is uncharacterized protein (112 aa).

The N-terminal stretch at 1-29 is a signal peptide; the sequence is MINLHRLCIIHVVATLLSTLLSLISVAIS. A glycan (N-linked (GlcNAc...) asparagine) is linked at Asn-84. A disordered region spans residues 84 to 112; sequence NLSKGYNQRPEGSKEESHMVVKEKRKGDH. Residues 94–112 show a composition bias toward basic and acidic residues; it reads EGSKEESHMVVKEKRKGDH.

The protein resides in the secreted. This is an uncharacterized protein from Homo sapiens (Human).